The chain runs to 164 residues: Putative 4-hydroxy-4-methyl-2-oxoglutarate aldolase (164 aa).

Substrate contacts are provided by residues 75 to 78 (GDLI) and arginine 97. Aspartate 98 lines the a divalent metal cation pocket.

This sequence belongs to the class II aldolase/RraA-like family. Homotrimer. A divalent metal cation serves as cofactor.

The enzyme catalyses 4-hydroxy-4-methyl-2-oxoglutarate = 2 pyruvate. It catalyses the reaction oxaloacetate + H(+) = pyruvate + CO2. Functionally, catalyzes the aldol cleavage of 4-hydroxy-4-methyl-2-oxoglutarate (HMG) into 2 molecules of pyruvate. Also contains a secondary oxaloacetate (OAA) decarboxylase activity due to the common pyruvate enolate transition state formed following C-C bond cleavage in the retro-aldol and decarboxylation reactions. This chain is Putative 4-hydroxy-4-methyl-2-oxoglutarate aldolase, found in Shewanella oneidensis (strain ATCC 700550 / JCM 31522 / CIP 106686 / LMG 19005 / NCIMB 14063 / MR-1).